Here is a 107-residue protein sequence, read N- to C-terminus: Conantokin-R (107 aa).

Residues 1–24 form the signal peptide; the sequence is MQLYTYLYLLVSLVTFYLILGTGT. A propeptide spanning residues 25–80 is cleaved from the precursor; the sequence is LGHGGALTERRSTDATALKPEPVLLQKSSARSTDDNGNDRLTQMKRILKKRGNKAR. The segment at 26–64 is disordered; the sequence is GHGGALTERRSTDATALKPEPVLLQKSSARSTDDNGNDR. A 4-carboxyglutamate mark is found at Glu83, Glu84, Glu91, and Glu95. A divalent metal cation is bound by residues Glu91 and Glu95. Cys101 and Cys105 are joined by a disulfide.

This sequence belongs to the conotoxin B superfamily. Requires Ca(2+) as cofactor. The cofactor is Mg(2+). In terms of tissue distribution, expressed by the venom duct.

Its subcellular location is the secreted. In terms of biological role, conantokins inhibit N-methyl-D-aspartate (NMDA) receptors. This toxin is potent in the following order of preference: NR2B approximately NR2A/GRIN2A &gt; NR2C/GRIN2C &gt;&gt; NR2D/GRIN2D. Induces sleep-like symptoms in young mice. Is a highly potent anticonvulsant compound. The protein is Conantokin-R of Conus radiatus (Rayed cone).